The sequence spans 68 residues: ATP synthase F(0) complex subunit 8 (68 aa).

The chain crosses the membrane as a helical span at residues 8 to 21; that stretch reads VWPTMITPMLLTLF. Lys-54 carries the post-translational modification N6-acetyllysine; alternate. Lys-54 bears the N6-succinyllysine; alternate mark. An N6-acetyllysine modification is found at Lys-57.

Belongs to the ATPase protein 8 family. Component of the ATP synthase complex composed at least of ATP5F1A/subunit alpha, ATP5F1B/subunit beta, ATP5MC1/subunit c (homooctomer), MT-ATP6/subunit a, MT-ATP8/subunit 8, ATP5ME/subunit e, ATP5MF/subunit f, ATP5MG/subunit g, ATP5MK/subunit k, ATP5MJ/subunit j, ATP5F1C/subunit gamma, ATP5F1D/subunit delta, ATP5F1E/subunit epsilon, ATP5PF/subunit F6, ATP5PB/subunit b, ATP5PD/subunit d, ATP5PO/subunit OSCP. ATP synthase complex consists of a soluble F(1) head domain (subunits alpha(3) and beta(3)) - the catalytic core - and a membrane F(0) domain - the membrane proton channel (subunits c, a, 8, e, f, g, k and j). These two domains are linked by a central stalk (subunits gamma, delta, and epsilon) rotating inside the F1 region and a stationary peripheral stalk (subunits F6, b, d, and OSCP). Interacts with PRICKLE3.

It is found in the mitochondrion membrane. Its function is as follows. Subunit 8, of the mitochondrial membrane ATP synthase complex (F(1)F(0) ATP synthase or Complex V) that produces ATP from ADP in the presence of a proton gradient across the membrane which is generated by electron transport complexes of the respiratory chain. ATP synthase complex consist of a soluble F(1) head domain - the catalytic core - and a membrane F(1) domain - the membrane proton channel. These two domains are linked by a central stalk rotating inside the F(1) region and a stationary peripheral stalk. During catalysis, ATP synthesis in the catalytic domain of F(1) is coupled via a rotary mechanism of the central stalk subunits to proton translocation. In vivo, can only synthesize ATP although its ATP hydrolase activity can be activated artificially in vitro. Part of the complex F(0) domain. This chain is ATP synthase F(0) complex subunit 8, found in Homo sapiens (Human).